The following is an 843-amino-acid chain: Protein P (843 aa).

The terminal protein domain (TP) stretch occupies residues 1-177 (MPLSYQHFRK…FCGSPYSWEQ (177 aa)). The tract at residues 178–346 (DLQHGRLVFQ…YCLCHIVNLI (169 aa)) is spacer. Disordered stretches follow at residues 220-258 (KSRL…VGVE) and 292-319 (SKGH…SQGS). A compositionally biased stretch (low complexity) spans 308–319 (PPNSSRSQSQGS). The segment at 347–690 (DDWGPCAEHG…YLNLYPVARQ (344 aa)) is polymerase/reverse transcriptase domain (RT). Residues 357–600 (EHRIRTPRTP…YSLNFMGYVI (244 aa)) enclose the Reverse transcriptase domain. Mg(2+) contacts are provided by Asp429, Asp551, and Asp552.

The protein belongs to the hepadnaviridae P protein family.

The catalysed reaction is DNA(n) + a 2'-deoxyribonucleoside 5'-triphosphate = DNA(n+1) + diphosphate. The enzyme catalyses Endonucleolytic cleavage to 5'-phosphomonoester.. Activated by host HSP70 and HSP40 in vitro to be able to bind the epsilon loop of the pgRNA. Because deletion of the RNase H region renders the protein partly chaperone-independent, the chaperones may be needed indirectly to relieve occlusion of the RNA-binding site by this domain. Inhibited by several reverse-transcriptase inhibitors: Lamivudine, Adefovir and Entecavir. In terms of biological role, multifunctional enzyme that converts the viral RNA genome into dsDNA in viral cytoplasmic capsids. This enzyme displays a DNA polymerase activity that can copy either DNA or RNA templates, and a ribonuclease H (RNase H) activity that cleaves the RNA strand of RNA-DNA heteroduplexes in a partially processive 3'- to 5'-endonucleasic mode. Neo-synthesized pregenomic RNA (pgRNA) are encapsidated together with the P protein, and reverse-transcribed inside the nucleocapsid. Initiation of reverse-transcription occurs first by binding the epsilon loop on the pgRNA genome, and is initiated by protein priming, thereby the 5'-end of (-)DNA is covalently linked to P protein. Partial (+)DNA is synthesized from the (-)DNA template and generates the relaxed circular DNA (RC-DNA) genome. After budding and infection, the RC-DNA migrates in the nucleus, and is converted into a plasmid-like covalently closed circular DNA (cccDNA). The activity of P protein does not seem to be necessary for cccDNA generation, and is presumably released from (+)DNA by host nuclear DNA repair machinery. The sequence is that of Protein P from Hepatitis B virus genotype B1 (isolate Japan/Yamagata-2/1998) (HBV-B).